The chain runs to 121 residues: MAKKKKLSFTNGIAYIHATKNNTIITLADEQGSVLSWASSGSIGYKGTKKKTPYSAGIAAEAAAKAVIDMGLKSVEVHVNGTGASRDTAIRSLQAAGLEVTKIKDVTPIPHNGCRPPKKPR.

The protein belongs to the universal ribosomal protein uS11 family. In terms of assembly, part of the 30S ribosomal subunit. Interacts with proteins S7 and S18. Binds to IF-3.

Located on the platform of the 30S subunit, it bridges several disparate RNA helices of the 16S rRNA. Forms part of the Shine-Dalgarno cleft in the 70S ribosome. The sequence is that of Small ribosomal subunit protein uS11 from Ureaplasma parvum serovar 3 (strain ATCC 27815 / 27 / NCTC 11736).